We begin with the raw amino-acid sequence, 137 residues long: Small ribosomal subunit protein uS9 (137 aa).

The tract at residues 103-137 is disordered; it reads PPLKAEGYLTRDPRAKERKKYGLHKARKAPQYSKR. Basic residues predominate over residues 118–137; sequence KERKKYGLHKARKAPQYSKR.

It belongs to the universal ribosomal protein uS9 family.

In Crocosphaera subtropica (strain ATCC 51142 / BH68) (Cyanothece sp. (strain ATCC 51142)), this protein is Small ribosomal subunit protein uS9.